Reading from the N-terminus, the 94-residue chain is PqqA binding protein (94 aa).

It belongs to the PqqD family. As to quaternary structure, monomer. Interacts with PqqE.

It functions in the pathway cofactor biosynthesis; pyrroloquinoline quinone biosynthesis. Its function is as follows. Functions as a PqqA binding protein and presents PqqA to PqqE, in the pyrroloquinoline quinone (PQQ) biosynthetic pathway. The protein is PqqA binding protein of Pseudomonas syringae pv. syringae (strain B728a).